A 415-amino-acid chain; its full sequence is Leucine-rich repeat-containing protein 34 (415 aa).

LRR repeat units lie at residues 246-272 and 274-296; these read SLRY…LKSN and TLEV…LSET.

In terms of assembly, interacts with NPM1 and NCL. As to expression, expressed in testis where it specifically localizes to germ cells (at protein level). Not detected in other tissues tested (at protein level). Expressed in pluripotent embryonic stem cells and multipotent adult germline stem cells.

The protein resides in the nucleus. The protein localises to the nucleolus. Its subcellular location is the cytoplasm. Its function is as follows. Highly expressed in stem cells where it may be involved in regulation of pluripotency. In embryonic stem cells (ESCs), important for normal expression of the pluripotency regulators POU5F1/OCT4 and KLF4. Also important for expression of the ectodermal marker gene NES and the endodermal marker gene GATA4. Promotes stem cell proliferation in vitro. The sequence is that of Leucine-rich repeat-containing protein 34 from Mus musculus (Mouse).